Consider the following 199-residue polypeptide: Probable GTP-binding protein EngB (199 aa).

An EngB-type G domain is found at 28–199; it reads DLPEIALAGR…ESWDTILEYL (172 aa). GTP is bound by residues 36–43, 63–67, 81–84, 148–151, and 180–182; these read GRSNVGKS, GKTQL, DVPG, TKAD, and FSS. Residues Ser43 and Thr65 each contribute to the Mg(2+) site.

This sequence belongs to the TRAFAC class TrmE-Era-EngA-EngB-Septin-like GTPase superfamily. EngB GTPase family. Requires Mg(2+) as cofactor.

Functionally, necessary for normal cell division and for the maintenance of normal septation. This Streptococcus equi subsp. zooepidemicus (strain H70) protein is Probable GTP-binding protein EngB.